The primary structure comprises 395 residues: Subtilisin-like protease 5 (395 aa).

A signal peptide spans 1-19 (MGFLTVLYLSLAALSVTNA). The propeptide occupies 20–115 (AQIMSAPNGA…VEPDAIISQH (96 aa)). In terms of domain architecture, Inhibitor I9 spans 36–112 (YIVVMKDDTS…VAFVEPDAII (77 aa)). The Peptidase S8 domain maps to 124-395 (PWGLSRLSNR…RRLLYNGSGR (272 aa)). Catalysis depends on charge relay system residues Asp-155 and His-186. Residues Asn-229 and Asn-247 are each glycosylated (N-linked (GlcNAc...) asparagine). Residue Ser-341 is the Charge relay system of the active site. The segment at 374–395 (QPTIHNPGPDTTRRLLYNGSGR) is disordered. N-linked (GlcNAc...) asparagine glycosylation is present at Asn-391.

The protein belongs to the peptidase S8 family.

The protein localises to the secreted. Functionally, secreted subtilisin-like serine protease with keratinolytic activity that contributes to pathogenicity. In Arthroderma otae (strain ATCC MYA-4605 / CBS 113480) (Microsporum canis), this protein is Subtilisin-like protease 5 (SUB5).